The primary structure comprises 198 residues: MRTFVLRARAAPTNSRALLEGVGNEAHTEILAHTLMNTMFVAQSHRQDVVVHLVLESTKDFSRTITIHSNEVSNVGGFHEANLLNIVVRALDASTGMGKEELRNVEPGVTVRTISFERLVQQLAENHQLYMLEKKGEFVRDIKFAANPCFLLTDHIPMPKKTFNSLKRLGTQNISLGPKMLFASQCVTLIQNELDLQE.

2 residues coordinate S-adenosyl-L-methionine: leucine 132 and cysteine 186.

This sequence belongs to the methyltransferase superfamily. TrmY family.

It localises to the cytoplasm. This is Putative pseudouridine methyltransferase from Vibrio vulnificus (strain CMCP6).